Consider the following 281-residue polypeptide: Complement C1q tumor necrosis factor-related protein 1 (281 aa).

The signal sequence occupies residues 1 to 25 (MGSCAQGFMLGCCLLLAITWGPILS). Positions 35-68 (QEWEETEELPSPLDPVTRPEETREKYSPRQGEDL) are disordered. The segment covering 51–66 (TRPEETREKYSPRQGE) has biased composition (basic and acidic residues). Asn93 is a glycosylation site (N-linked (GlcNAc...) asparagine). Residues 99 to 140 (GEKGDRGDRGLQGKYGKIGSTGPRGHVGPKGQKGSIGAPGNH) form the Collagen-like domain. Positions 107–136 (RGLQGKYGKIGSTGPRGHVGPKGQKGSIGA) are disordered. The 141-residue stretch at 141 to 281 (CKSQYAAFSV…GYLVKPASEP (141 aa)) folds into the C1q domain.

Its subcellular location is the secreted. This Mus musculus (Mouse) protein is Complement C1q tumor necrosis factor-related protein 1 (C1qtnf1).